The primary structure comprises 98 residues: Small ribosomal subunit protein bS20 (98 aa).

The segment covering 1–12 (MAPRKPSKKVGP) has biased composition (basic residues). The interval 1–34 (MAPRKPSKKVGPQKRPSAEKRVITSKKKQLRNQS) is disordered.

Belongs to the bacterial ribosomal protein bS20 family.

Functionally, binds directly to 16S ribosomal RNA. The polypeptide is Small ribosomal subunit protein bS20 (Chlamydia muridarum (strain MoPn / Nigg)).